The sequence spans 137 residues: Endoribonuclease YbeY (137 aa).

Positions 107, 111, and 117 each coordinate Zn(2+).

It belongs to the endoribonuclease YbeY family. The cofactor is Zn(2+).

The protein resides in the cytoplasm. In terms of biological role, single strand-specific metallo-endoribonuclease involved in late-stage 70S ribosome quality control and in maturation of the 3' terminus of the 16S rRNA. The chain is Endoribonuclease YbeY from Bacteroides thetaiotaomicron (strain ATCC 29148 / DSM 2079 / JCM 5827 / CCUG 10774 / NCTC 10582 / VPI-5482 / E50).